A 57-amino-acid polypeptide reads, in one-letter code: UPF0391 membrane protein RB0084 (57 aa).

2 consecutive transmembrane segments (helical) span residues 4 to 24 and 33 to 53; these read WALIFFVISLIAGFLGFSGVS and ILFYIAVIIFLVFLVLALAVG.

It belongs to the UPF0391 family.

The protein localises to the cell membrane. The protein is UPF0391 membrane protein RB0084 of Rhizobium meliloti (strain 1021) (Ensifer meliloti).